The primary structure comprises 80 residues: Raniseptin-5 (80 aa).

An N-terminal signal peptide occupies residues 1–22 (MAFLKKSLFLVLFLGIVSLSIC). A propeptide spanning residues 23-49 (EEEKREGEEEEKQEEENEELSEEELRE) is cleaved from the precursor.

This sequence belongs to the frog skin active peptide (FSAP) family. Dermaseptin subfamily. As to expression, expressed by the skin glands.

The protein localises to the secreted. Has antibacterial activity. The chain is Raniseptin-5 from Boana raniceps (Chaco tree frog).